Here is a 133-residue protein sequence, read N- to C-terminus: Minor spike protein H (133 aa).

The protein belongs to the microviridae H protein family.

The protein resides in the virion. Probably triggers with protein G the injection of the phage DNA into the host upon conformational changes induced by virus-host receptor interaction. In Spiroplasma virus 4 (SpV4), this protein is Minor spike protein H.